A 75-amino-acid chain; its full sequence is UPF0352 protein YejL (75 aa).

Belongs to the UPF0352 family.

In Shigella dysenteriae serotype 1 (strain Sd197), this protein is UPF0352 protein YejL.